The following is a 236-amino-acid chain: Mammalian ependymin-related protein 1 (236 aa).

An N-terminal signal peptide occupies residues 1–35; that stretch reads MPRRAPLRVARGSLDAWLLGGLWVCALGCLCGVGM. Cystine bridges form between Cys-54–Cys-184, Cys-100–Cys-234, and Cys-125–Cys-222. Residues Asn-142 and Asn-194 are each glycosylated (N-linked (GlcNAc...) asparagine).

This sequence belongs to the ependymin family. Homodimer. N-glycosylated; the glycan contains mannose-6-phosphate moieties.

The protein localises to the lysosome lumen. Its subcellular location is the secreted. Functionally, binds anionic lipids and gangliosides at acidic pH. This chain is Mammalian ependymin-related protein 1 (EPDR1), found in Bos taurus (Bovine).